Consider the following 600-residue polypeptide: Gamma-terpinene synthase, chloroplastic (600 aa).

A chloroplast-targeting transit peptide spans 1–40 (MALNLLSSLPAACNFTRLSLPLSSKVNGFVPPITQVQYPM). Mg(2+)-binding residues include Asp353, Asp357, Asp498, and Glu506. A DDXXD motif motif is present at residues 353–357 (DDVYD).

Belongs to the terpene synthase family. The cofactor is Mn(2+). Mg(2+) is required as a cofactor.

It localises to the plastid. Its subcellular location is the chloroplast. The catalysed reaction is (2E)-geranyl diphosphate = gamma-terpinene + diphosphate. Its pathway is secondary metabolite biosynthesis; terpenoid biosynthesis. Its activity is regulated as follows. Inhibited by 100 mM KCl. Its function is as follows. Monoterpene synthase which catalyzes the conversion of geranyl diphosphate to gamma-terpinene and the minor products limonene, alpha-pinene, beta-pinene, alpha-terpinolene, alpha-thujene, alpha-terpinene, myrcene and sabinene. The chain is Gamma-terpinene synthase, chloroplastic from Citrus limon (Lemon).